We begin with the raw amino-acid sequence, 898 residues long: Tight junction protein ZO-3 (898 aa).

In terms of domain architecture, PDZ 1 spans 11–93 (TATLCRDPRR…LANITVKRPR (83 aa)). The disordered stretch occupies residues 98–165 (PATKAGTSGR…SPGGNSEANG (68 aa)). Residues Ser128, Ser156, Ser161, Ser195, and Ser313 each carry the phosphoserine modification. A PDZ 2 domain is found at 187-264 (SVLVRRTESE…KLTLLVLRDR (78 aa)). The tract at residues 295-368 (LSQAVPSHVP…QSAEDRGYSP (74 aa)) is disordered. Positions 312-349 (RSLDSDGTDSPRDSPPLRRENSLDSRTISEPDAPRHSS) are enriched in basic and acidic residues. Thr319 carries the phosphothreonine modification. Residues Ser321 and Ser360 each carry the phosphoserine modification. Residues 369 to 435 (DSRVVRFHKG…LTREEAVQFL (67 aa)) enclose the PDZ 3 domain. The region spanning 464–538 (GDSFYIRTHF…PNQSRAEQLA (75 aa)) is the SH3 domain. Residues 569–750 (LRRGAKKSTQ…WYQELKAVVR (182 aa)) form the Guanylate kinase-like domain. Ser580 carries the phosphoserine modification. The interval 759–898 (TAEDQLDNSS…GYDWGPATDL (140 aa)) is disordered. Acidic residues predominate over residues 762–772 (DQLDNSSEDNL). Positions 780-790 (ADSSADLSCDS) are enriched in low complexity. Over residues 796 to 814 (YETDGEGYTDGEGYTDVDE) the composition is skewed to acidic residues. Residues 831-841 (EEPRSPRDHGR) show a composition bias toward basic and acidic residues. Ser835, Ser884, and Ser885 each carry phosphoserine.

Belongs to the MAGUK family. In terms of assembly, heterodimer with TJP1. Interacts with UBN1. Interacts with occludin OCLN and claudins. Interacts with PATJ. Interacts with FASLG. Interacts with CCND1. In terms of processing, phosphorylated.

Its subcellular location is the cell membrane. It is found in the cell junction. It localises to the tight junction. The protein resides in the nucleus. Functionally, TJP1, TJP2, and TJP3 are closely related scaffolding proteins that link tight junction (TJ) transmembrane proteins such as claudins, junctional adhesion molecules, and occludin to the actin cytoskeleton. The tight junction acts to limit movement of substances through the paracellular space and as a boundary between the compositionally distinct apical and basolateral plasma membrane domains of epithelial and endothelial cells. Binds and recruits PATJ to tight junctions where it connects and stabilizes apical and lateral components of tight junctions. Promotes cell-cycle progression through the sequestration of cyclin D1 (CCND1) at tight junctions during mitosis which prevents CCND1 degradation during M-phase and enables S-phase transition. With TJP1 and TJP2, participates in the junctional retention and stability of the transcription factor DBPA, but is not involved in its shuttling to the nucleus. Contrary to TJP2, TJP3 is dispensable for individual viability, embryonic development, epithelial differentiation, and the establishment of TJs, at least in the laboratory environment. This is Tight junction protein ZO-3 (TJP3) from Canis lupus familiaris (Dog).